The sequence spans 419 residues: UDP-N-acetylglucosamine 1-carboxyvinyltransferase (419 aa).

Residue 22–23 participates in phosphoenolpyruvate binding; that stretch reads KN. Arg-93 is a UDP-N-acetyl-alpha-D-glucosamine binding site. Catalysis depends on Cys-117, which acts as the Proton donor. The residue at position 117 (Cys-117) is a 2-(S-cysteinyl)pyruvic acid O-phosphothioketal. UDP-N-acetyl-alpha-D-glucosamine contacts are provided by Asp-307 and Ile-329.

It belongs to the EPSP synthase family. MurA subfamily.

Its subcellular location is the cytoplasm. It catalyses the reaction phosphoenolpyruvate + UDP-N-acetyl-alpha-D-glucosamine = UDP-N-acetyl-3-O-(1-carboxyvinyl)-alpha-D-glucosamine + phosphate. The protein operates within cell wall biogenesis; peptidoglycan biosynthesis. In terms of biological role, cell wall formation. Adds enolpyruvyl to UDP-N-acetylglucosamine. This Shewanella sp. (strain MR-7) protein is UDP-N-acetylglucosamine 1-carboxyvinyltransferase.